The primary structure comprises 844 residues: Janus kinase and microtubule-interacting protein 3 (844 aa).

Positions 8–258 (SRAKGDKAEA…QLSQVREADR (251 aa)) form a coiled coil. The tract at residues 250–290 (LSQVREADRHPGSPRRELPHAAGAGDASDHSGSPEQQLDEK) is disordered. Over residues 254 to 268 (READRHPGSPRRELP) the composition is skewed to basic and acidic residues. The span at 269-282 (HAAGAGDASDHSGS) shows a compositional bias: low complexity. A coiled-coil region spans residues 289-421 (EKDARRFQLK…DELSKTLETA (133 aa)). Ser384 carries the phosphoserine modification. Over residues 466–483 (SDGSSVSYQTDRTDQTPC) the composition is skewed to polar residues. A disordered region spans residues 466-489 (SDGSSVSYQTDRTDQTPCTPDDDL). Coiled-coil stretches lie at residues 493–621 (MAKE…RERK) and 683–834 (VLTL…FLFL).

This sequence belongs to the JAKMIP family. Specifically expressed in the CNS and endocrine tissues. Also detected in other tissues including heart, testis and prostate.

It is found in the golgi apparatus. The sequence is that of Janus kinase and microtubule-interacting protein 3 (JAKMIP3) from Homo sapiens (Human).